The chain runs to 73 residues: Large ribosomal subunit protein bL31 (73 aa).

This sequence belongs to the bacterial ribosomal protein bL31 family. Type A subfamily. As to quaternary structure, part of the 50S ribosomal subunit.

Functionally, binds the 23S rRNA. This Cereibacter sphaeroides (strain ATCC 17025 / ATH 2.4.3) (Rhodobacter sphaeroides) protein is Large ribosomal subunit protein bL31.